Consider the following 380-residue polypeptide: Chorismate synthase (380 aa).

NADP(+) is bound at residue Arg-47. FMN is bound by residues 124–126, Gly-288, 303–307, and Arg-329; these read RSS and KPTST.

Belongs to the chorismate synthase family. Homotetramer. FMNH2 is required as a cofactor.

The enzyme catalyses 5-O-(1-carboxyvinyl)-3-phosphoshikimate = chorismate + phosphate. Its pathway is metabolic intermediate biosynthesis; chorismate biosynthesis; chorismate from D-erythrose 4-phosphate and phosphoenolpyruvate: step 7/7. In terms of biological role, catalyzes the anti-1,4-elimination of the C-3 phosphate and the C-6 proR hydrogen from 5-enolpyruvylshikimate-3-phosphate (EPSP) to yield chorismate, which is the branch point compound that serves as the starting substrate for the three terminal pathways of aromatic amino acid biosynthesis. This reaction introduces a second double bond into the aromatic ring system. This chain is Chorismate synthase, found in Leptospira borgpetersenii serovar Hardjo-bovis (strain JB197).